Reading from the N-terminus, the 211-residue chain is MELEDIRRDYSLGGLRRADLPQAPIELFELWLKQAVEAKLTDPTAMTVATVDKKGQPFQRIVLLKHFDSTGFVFYTNLASRKAQHLEDNSKISLHFPWHPLERQVHITGTAEKLTALENMKYFTSRPKESQIAAWASKQSSRLTARAALEGKYLELKQQFSKGEIPVPKFWGGFRVKIDSIEFWQGGDSRLHDRFLYSKDQDKWVIDRLAP.

Substrate is bound by residues 7–10 and Lys-65; that span reads RRDY. FMN contacts are provided by residues 60 to 65, 75 to 76, Arg-81, Lys-82, and Gln-104; these read RIVLLK and YT. The substrate site is built by Tyr-122, Arg-126, and Ser-130. Residues 139-140 and Trp-184 contribute to the FMN site; that span reads QS. 190–192 is a binding site for substrate; sequence RLH. Arg-194 is a binding site for FMN.

Belongs to the pyridoxamine 5'-phosphate oxidase family. In terms of assembly, homodimer. FMN serves as cofactor.

The catalysed reaction is pyridoxamine 5'-phosphate + O2 + H2O = pyridoxal 5'-phosphate + H2O2 + NH4(+). It catalyses the reaction pyridoxine 5'-phosphate + O2 = pyridoxal 5'-phosphate + H2O2. The protein operates within cofactor metabolism; pyridoxal 5'-phosphate salvage; pyridoxal 5'-phosphate from pyridoxamine 5'-phosphate: step 1/1. It participates in cofactor metabolism; pyridoxal 5'-phosphate salvage; pyridoxal 5'-phosphate from pyridoxine 5'-phosphate: step 1/1. Functionally, catalyzes the oxidation of either pyridoxine 5'-phosphate (PNP) or pyridoxamine 5'-phosphate (PMP) into pyridoxal 5'-phosphate (PLP). This chain is Pyridoxine/pyridoxamine 5'-phosphate oxidase, found in Aliivibrio salmonicida (strain LFI1238) (Vibrio salmonicida (strain LFI1238)).